The sequence spans 252 residues: Membrane protein insertase YidC (252 aa).

A signal peptide spans 1 to 19 (MKKVLWIIIIILMVGALAG). Cysteine 20 carries the N-palmitoyl cysteine lipid modification. Cysteine 20 carries the S-diacylglycerol cysteine lipid modification. Helical transmembrane passes span 34–54 (IWNHFFVYPLSWVLISVADLL), 58–78 (FGLSIIVVTIGIRLFLLPLMI), 131–151 (MAGCLPLFIQLPVMMAFYFAI), 162–182 (FLWFDLGSPDPLYILPVVAGI), 201–221 (VIIYIMPVMIVVAGVTLPSAL), and 223–243 (LYWVVGNLFMIIQTYFTVVRF).

It belongs to the OXA1/ALB3/YidC family. Type 2 subfamily.

The protein localises to the cell membrane. Its function is as follows. Required for the insertion and/or proper folding and/or complex formation of integral membrane proteins into the membrane. Involved in integration of membrane proteins that insert both dependently and independently of the Sec translocase complex, as well as at least some lipoproteins. This is Membrane protein insertase YidC from Alkalihalophilus pseudofirmus (strain ATCC BAA-2126 / JCM 17055 / OF4) (Bacillus pseudofirmus).